The sequence spans 167 residues: Lipoprotein signal peptidase (167 aa).

The next 3 membrane-spanning stretches (helical) occupy residues 8-28, 61-81, and 93-113; these read FFLL…YWIM, FSHW…LWLW, and FGLT…ICFY. Residues D117 and D136 contribute to the active site. A helical transmembrane segment spans residues 126 to 146; it reads IFYFAVFNLADTFITLGVIAI.

It belongs to the peptidase A8 family.

The protein localises to the cell inner membrane. The enzyme catalyses Release of signal peptides from bacterial membrane prolipoproteins. Hydrolyzes -Xaa-Yaa-Zaa-|-(S,diacylglyceryl)Cys-, in which Xaa is hydrophobic (preferably Leu), and Yaa (Ala or Ser) and Zaa (Gly or Ala) have small, neutral side chains.. It functions in the pathway protein modification; lipoprotein biosynthesis (signal peptide cleavage). This protein specifically catalyzes the removal of signal peptides from prolipoproteins. This is Lipoprotein signal peptidase from Bartonella quintana (strain Toulouse) (Rochalimaea quintana).